The following is a 296-amino-acid chain: MAAGGPGAGSAAPVSSTSSLPLAALNMRVRRRLSLFLNVRTQVAADWTALAEEMDFEYLEIRQLETHADPTGRLLDAWQGRPGASVGRLLELLTKLGRDDVLLELGPSIEEDCQKYILKQQQEEAEKPLQVAAVDSSVPRTAELAGITTLDDPLGHMPERFDAFICYCPSDIQFVQEMIRQLEQTNYRLKLCVSDRDVLPGTCVWSIASELIEKRCRRMVVVVSDDYLQSKECDFQTKFALSLSPGAHQKRLIPIKYKAMKKEFPSILRFITVCDYTNPCTKSWFWTRLAKALSLP.

Residues 32–109 (RLSLFLNVRT…DVLLELGPSI (78 aa)) enclose the Death domain. The tract at residues 110 to 155 (EEDCQKYILKQQQEEAEKPLQVAAVDSSVPRTAELAGITTLDDPLG) is intermediate domain. Residues 159–293 (ERFDAFICYC…WFWTRLAKAL (135 aa)) enclose the TIR domain. The residue at position 244 (Ser244) is a Phosphoserine.

As to quaternary structure, homodimer. Also forms heterodimers with TIRAP. Binds to TLR2, TLR4, TLR5, IRAK1, IRAK2 and IRAK4 via their respective TIR domains. Interacts with IL18R1. Interacts with BMX, IL1RL1, IKBKE and IRF7. Interacts with LRRFIP1 and LRRFIP2; this interaction positively regulates Toll-like receptor (TLR) signaling in response to agonist. Interacts with FLII. LRRFIP1 and LRRFIP2 compete with FLII for MYD88-binding. Interacts with IRF1. Upon IL1B treatment, forms a complex with PELI1, IRAK1, IRAK4 and TRAF6; this complex recruits MAP3K7/TAK1, TAB1 and TAB2 to mediate NF-kappa-B activation. Direct binding of SMAD6 to PELI1 prevents the complex formation and hence negatively regulates IL1R-TLR signaling and eventually NF-kappa-B-mediated gene expression. May interact with PIK3AP1. Interacts (via TIR domain) with DHX9 (via H2A and OB-fold regions); this interaction is direct. Interacts with OTUD4 deubiquitinase; the interaction is direct. Post-translationally, ubiquitinated; undergoes 'Lys-63'-linked polyubiquitination. OTUD4 specifically hydrolyzes 'Lys-63'-linked polyubiquitinated MYD88. Deubiquitinated by USP3 that cleaves 'Lys-63'-linked ubiquitin chains leading to inhibition of MYD88-induced NF-kappa-B signaling.

It is found in the cytoplasm. It localises to the nucleus. Functionally, adapter protein involved in the Toll-like receptor and IL-1 receptor signaling pathway in the innate immune response. Acts via IRAK1, IRAK2, IRF7 and TRAF6, leading to NF-kappa-B activation, cytokine secretion and the inflammatory response. Increases IL-8 transcription. Involved in IL-18-mediated signaling pathway. Activates IRF1 resulting in its rapid migration into the nucleus to mediate an efficient induction of IFN-beta, NOS2/INOS, and IL12A genes. Upon TLR8 activation by GU-rich single-stranded RNA (GU-rich RNA) derived from viruses, induces IL1B release through NLRP3 inflammasome activation. MyD88-mediated signaling in intestinal epithelial cells is crucial for maintenance of gut homeostasis and controls the expression of the antimicrobial lectin REG3G in the small intestine. This chain is Myeloid differentiation primary response protein MyD88 (MYD88), found in Gorilla gorilla gorilla (Western lowland gorilla).